The primary structure comprises 390 residues: Zinc finger protein 121 (390 aa).

Residues 88-110 (FEYSDCEEAFVDQSHLQANRITH) form a C2H2-type 1; degenerate zinc finger. The C2H2-type 2; degenerate zinc finger occupies 116 to 138 (YEQKQCGRAFTYSTSHAVSVKMH). 9 C2H2-type zinc fingers span residues 144-166 (YECK…MRTH), 172-194 (YECK…VRIH), 200-222 (YQCK…VRIH), 228-250 (YECN…FKTH), 256-278 (FECK…FRIH), 284-306 (YKCK…VKIH), 312-334 (YECK…IRTH), 340-362 (YICK…VRIH), and 368-390 (YICN…LKTH).

It belongs to the krueppel C2H2-type zinc-finger protein family.

It is found in the nucleus. Its function is as follows. May be involved in transcriptional regulation. The chain is Zinc finger protein 121 (ZNF121) from Homo sapiens (Human).